The primary structure comprises 501 residues: Ribulose bisphosphate carboxylase large chain (501 aa).

Substrate contacts are provided by asparagine 141 and threonine 191. Lysine 193 functions as the Proton acceptor in the catalytic mechanism. Substrate is bound at residue lysine 195. Mg(2+) contacts are provided by lysine 219, aspartate 221, and glutamate 222. Lysine 219 carries the post-translational modification N6-carboxylysine. The Proton acceptor role is filled by histidine 311. Arginine 312, histidine 344, and serine 396 together coordinate substrate.

It belongs to the RuBisCO large chain family. Type I subfamily. Heterohexadecamer of 8 large chains and 8 small chains. It depends on Mg(2+) as a cofactor.

The catalysed reaction is 2 (2R)-3-phosphoglycerate + 2 H(+) = D-ribulose 1,5-bisphosphate + CO2 + H2O. It carries out the reaction D-ribulose 1,5-bisphosphate + O2 = 2-phosphoglycolate + (2R)-3-phosphoglycerate + 2 H(+). In terms of biological role, ruBisCO catalyzes two reactions: the carboxylation of D-ribulose 1,5-bisphosphate, the primary event in carbon dioxide fixation, as well as the oxidative fragmentation of the pentose substrate. Both reactions occur simultaneously and in competition at the same active site. This chain is Ribulose bisphosphate carboxylase large chain, found in Paraburkholderia phymatum (strain DSM 17167 / CIP 108236 / LMG 21445 / STM815) (Burkholderia phymatum).